The chain runs to 63 residues: MKIIYIILGFLSLAIGIIGIFPSSFAYHAFFITYFIFLHKRFKTLRTMVFRHKYLSKTSQVLS.

Residues 3–23 (IIYIILGFLSLAIGIIGIFPS) form a helical membrane-spanning segment.

It is found in the membrane. This is an uncharacterized protein from Haemophilus influenzae (strain ATCC 51907 / DSM 11121 / KW20 / Rd).